A 76-amino-acid chain; its full sequence is Putative UPF0377 protein YGL260W (76 aa).

Belongs to the UPF0377 family.

This is Putative UPF0377 protein YGL260W from Saccharomyces cerevisiae (strain ATCC 204508 / S288c) (Baker's yeast).